The chain runs to 54 residues: UPF0391 membrane protein Bpro_0879 (54 aa).

Helical transmembrane passes span 6–26 and 30–50; these read VVFL…IAAG and IAKI…VMGL.

It belongs to the UPF0391 family.

It localises to the cell membrane. This is UPF0391 membrane protein Bpro_0879 from Polaromonas sp. (strain JS666 / ATCC BAA-500).